Consider the following 128-residue polypeptide: Large ribosomal subunit protein bL17 (128 aa).

It belongs to the bacterial ribosomal protein bL17 family. In terms of assembly, part of the 50S ribosomal subunit. Contacts protein L32.

This chain is Large ribosomal subunit protein bL17, found in Pseudomonas savastanoi pv. phaseolicola (strain 1448A / Race 6) (Pseudomonas syringae pv. phaseolicola (strain 1448A / Race 6)).